Consider the following 646-residue polypeptide: Microtubule-associated protein 9 (646 aa).

S2 is subject to N-acetylserine. At Y12 the chain carries Phosphotyrosine. Disordered stretches follow at residues 75–226, 242–418, 491–511, 531–554, 570–597, and 609–646; these read DFHI…QTEE, SLTS…LEPD, RLEE…KGEA, RREK…KKKD, LKQK…KDKQ, and KERQ…SKVF. 2 stretches are compositionally biased toward polar residues: residues 105–119 and 157–167; these read ALDS…SSPD and RSTSSGETSSG. Over residues 188 to 204 the composition is skewed to basic and acidic residues; that stretch reads SHTEEGVRPGVDKEHSI. 3 stretches are compositionally biased toward polar residues: residues 205–222, 280–291, and 330–340; these read SEAS…GTEL, LLSNENEGSSVL, and PLLSTSPSVIT. A compositionally biased stretch (basic and acidic residues) spans 346-357; the sequence is EPAKKANEDRNT. Positions 386–398 are enriched in polar residues; that stretch reads TKRSPSAATSSHY. The span at 405–418 shows a compositional bias: basic and acidic residues; it reads LDQKQPRKQSLEPD. Residues 442–596 are a coiled coil; sequence MHRIKRIESE…KRAEKKDKDK (155 aa). Residues 637 to 646 are compositionally biased toward polar residues; that stretch reads PSRTAPSKVF.

As to quaternary structure, binds to purified microtubules via its C-terminus.

The protein localises to the cytoplasm. The protein resides in the cytoskeleton. It localises to the spindle. Functionally, involved in organization of the bipolar mitotic spindle. Required for bipolar spindle assembly, mitosis progression and cytokinesis. May act by stabilizing interphase microtubules. The polypeptide is Microtubule-associated protein 9 (Map9) (Mus musculus (Mouse)).